We begin with the raw amino-acid sequence, 166 residues long: Large ribosomal subunit protein uL10 (166 aa).

This sequence belongs to the universal ribosomal protein uL10 family. Part of the ribosomal stalk of the 50S ribosomal subunit. The N-terminus interacts with L11 and the large rRNA to form the base of the stalk. The C-terminus forms an elongated spine to which L12 dimers bind in a sequential fashion forming a multimeric L10(L12)X complex.

In terms of biological role, forms part of the ribosomal stalk, playing a central role in the interaction of the ribosome with GTP-bound translation factors. The protein is Large ribosomal subunit protein uL10 of Limosilactobacillus reuteri (strain DSM 20016) (Lactobacillus reuteri).